The following is a 404-amino-acid chain: Formate-dependent phosphoribosylglycinamide formyltransferase (404 aa).

N(1)-(5-phospho-beta-D-ribosyl)glycinamide-binding positions include 25–26 (EL) and Glu-85. ATP contacts are provided by residues Arg-118, Lys-159, 164-169 (SSGKGQ), 199-202 (EGFI), and Glu-207. Residues 123 to 318 (RLAAEELGLA…EFELHARAIL (196 aa)) enclose the ATP-grasp domain. Mg(2+) is bound by residues Glu-277 and Glu-289. N(1)-(5-phospho-beta-D-ribosyl)glycinamide-binding positions include Asp-296, Lys-365, and 372–373 (RR).

It belongs to the PurK/PurT family. Homodimer.

It catalyses the reaction N(1)-(5-phospho-beta-D-ribosyl)glycinamide + formate + ATP = N(2)-formyl-N(1)-(5-phospho-beta-D-ribosyl)glycinamide + ADP + phosphate + H(+). It functions in the pathway purine metabolism; IMP biosynthesis via de novo pathway; N(2)-formyl-N(1)-(5-phospho-D-ribosyl)glycinamide from N(1)-(5-phospho-D-ribosyl)glycinamide (formate route): step 1/1. Functionally, involved in the de novo purine biosynthesis. Catalyzes the transfer of formate to 5-phospho-ribosyl-glycinamide (GAR), producing 5-phospho-ribosyl-N-formylglycinamide (FGAR). Formate is provided by PurU via hydrolysis of 10-formyl-tetrahydrofolate. The protein is Formate-dependent phosphoribosylglycinamide formyltransferase of Burkholderia vietnamiensis (strain G4 / LMG 22486) (Burkholderia cepacia (strain R1808)).